A 370-amino-acid polypeptide reads, in one-letter code: Quinolinate synthase (370 aa).

2 residues coordinate iminosuccinate: His62 and Ser83. Cys128 lines the [4Fe-4S] cluster pocket. Iminosuccinate is bound by residues 154–156 (YAN) and Ser171. Cys215 provides a ligand contact to [4Fe-4S] cluster. Residues 241–243 (HPE) and Thr258 each bind iminosuccinate. A [4Fe-4S] cluster-binding site is contributed by Cys312.

Belongs to the quinolinate synthase family. Type 1 subfamily. The cofactor is [4Fe-4S] cluster.

The protein resides in the cytoplasm. The enzyme catalyses iminosuccinate + dihydroxyacetone phosphate = quinolinate + phosphate + 2 H2O + H(+). The protein operates within cofactor biosynthesis; NAD(+) biosynthesis; quinolinate from iminoaspartate: step 1/1. In terms of biological role, catalyzes the condensation of iminoaspartate with dihydroxyacetone phosphate to form quinolinate. In Neisseria meningitidis serogroup B (strain ATCC BAA-335 / MC58), this protein is Quinolinate synthase.